We begin with the raw amino-acid sequence, 555 residues long: CTP synthase (555 aa).

The segment at 1–267 is amidoligase domain; that stretch reads MPKFVFVTGG…CKEVLEFLDL (267 aa). Ser-13 is a binding site for CTP. Ser-13 serves as a coordination point for UTP. ATP-binding positions include 14–19 and Asp-71; that span reads SIGKGI. Mg(2+) contacts are provided by Asp-71 and Glu-141. CTP is bound by residues 148 to 150, 188 to 193, and Lys-224; these read DIE and KTKPTQ. UTP is bound by residues 188–193 and Lys-224; that span reads KTKPTQ. Residues 292-534 enclose the Glutamine amidotransferase type-1 domain; the sequence is KVAVVGKYVQ…IAAAQSRLPR (243 aa). Residue Gly-354 participates in L-glutamine binding. Cys-381 serves as the catalytic Nucleophile; for glutamine hydrolysis. L-glutamine is bound by residues 382–385, Glu-405, and Arg-462; that span reads LGMQ. Residues His-507 and Glu-509 contribute to the active site. Positions 532 to 555 are disordered; sequence LPRSPQEALKQTQINSPNQSKNNP. Residues 540–555 are compositionally biased toward polar residues; it reads LKQTQINSPNQSKNNP.

This sequence belongs to the CTP synthase family. In terms of assembly, homotetramer.

It catalyses the reaction UTP + L-glutamine + ATP + H2O = CTP + L-glutamate + ADP + phosphate + 2 H(+). It carries out the reaction L-glutamine + H2O = L-glutamate + NH4(+). The enzyme catalyses UTP + NH4(+) + ATP = CTP + ADP + phosphate + 2 H(+). It functions in the pathway pyrimidine metabolism; CTP biosynthesis via de novo pathway; CTP from UDP: step 2/2. With respect to regulation, allosterically activated by GTP, when glutamine is the substrate; GTP has no effect on the reaction when ammonia is the substrate. The allosteric effector GTP functions by stabilizing the protein conformation that binds the tetrahedral intermediate(s) formed during glutamine hydrolysis. Inhibited by the product CTP, via allosteric rather than competitive inhibition. In terms of biological role, catalyzes the ATP-dependent amination of UTP to CTP with either L-glutamine or ammonia as the source of nitrogen. Regulates intracellular CTP levels through interactions with the four ribonucleotide triphosphates. This is CTP synthase from Prochlorococcus marinus (strain MIT 9211).